Consider the following 457-residue polypeptide: Chromosomal replication initiator protein DnaA (457 aa).

The segment at 1–73 (MANNYQTLYD…SKYLSEEFKK (73 aa)) is domain I, interacts with DnaA modulators. The interval 73–108 (KENIVNFEFIIDNEKLLINSNFLIKETNIKNRFNFS) is domain II. The domain III, AAA+ region stretch occupies residues 109–331 (DELLRYNFNN…GNLKQICFWA (223 aa)). 4 residues coordinate ATP: glycine 156, glycine 158, lysine 159, and threonine 160. The tract at residues 332 to 457 (DNDTNKDLII…LQINLIINKF (126 aa)) is domain IV, binds dsDNA.

The protein belongs to the DnaA family. As to quaternary structure, oligomerizes as a right-handed, spiral filament on DNA at oriC.

The protein localises to the cytoplasm. Plays an essential role in the initiation and regulation of chromosomal replication. ATP-DnaA binds to the origin of replication (oriC) to initiate formation of the DNA replication initiation complex once per cell cycle. Binds the DnaA box (a 9 base pair repeat at the origin) and separates the double-stranded (ds)DNA. Forms a right-handed helical filament on oriC DNA; dsDNA binds to the exterior of the filament while single-stranded (ss)DNA is stabiized in the filament's interior. The ATP-DnaA-oriC complex binds and stabilizes one strand of the AT-rich DNA unwinding element (DUE), permitting loading of DNA polymerase. After initiation quickly degrades to an ADP-DnaA complex that is not apt for DNA replication. Binds acidic phospholipids. This Ureaplasma parvum serovar 3 (strain ATCC 700970) protein is Chromosomal replication initiator protein DnaA.